A 421-amino-acid chain; its full sequence is MENMFRLMASEEYFSERRCVWVNGPVIVGAGPSGLATAACLHDQGVPFVVVERSDCIASLWQKRTYDRLKLHLPKKFCQLPKMPFPDHYPEYPTKRQFIDYLESYANRFDIKPEFNKSVESARFDETSGLWRVRTTSDGEEMEYICRWLVVATGENAERVVPEINGLMTEFDGEVIHACEYKSGEKFRGKRVLVVGCGNSGMEVSLDLANHNAITSMVVRSSVHVLPREIMGKSTFGISVMMMKWLPLWLVDKLLLILSWLVLGSLSNYGLKRPDIGPMELKSMTGKTPVLDIGALEKIKSGDVEIVPAIKQFSRHHVELVDGQKLDIDAVVLATGYRSNVPSWLQESEFFSKNGFPKSPFPNAWKGKSGLYAAGFTRKGLAGASVDAVNIAQDIGNVWREETKRQKMRRNVGHRRCISVA.

Residue 29-34 (GAGPSG) participates in FAD binding. NADP(+) is bound at residue 196–201 (GCGNSG).

It belongs to the FMO family. Requires FAD as cofactor.

The catalysed reaction is indole-3-pyruvate + NADPH + O2 + H(+) = (indol-3-yl)acetate + CO2 + NADP(+) + H2O. It functions in the pathway plant hormone metabolism; auxin biosynthesis. In terms of biological role, involved in auxin biosynthesis. Belongs to the set of redundant YUCCA genes probably responsible for auxin biosynthesis in roots. The protein is Probable indole-3-pyruvate monooxygenase YUCCA9 (YUC9) of Arabidopsis thaliana (Mouse-ear cress).